The sequence spans 189 residues: NADH-quinone oxidoreductase subunit B (189 aa).

4 residues coordinate [4Fe-4S] cluster: Cys-39, Cys-40, Cys-104, and Cys-135.

This sequence belongs to the complex I 20 kDa subunit family. In terms of assembly, NDH-1 is composed of 14 different subunits. Subunits NuoB, C, D, E, F, and G constitute the peripheral sector of the complex. The cofactor is [4Fe-4S] cluster.

The protein localises to the cell inner membrane. The catalysed reaction is a quinone + NADH + 5 H(+)(in) = a quinol + NAD(+) + 4 H(+)(out). Functionally, NDH-1 shuttles electrons from NADH, via FMN and iron-sulfur (Fe-S) centers, to quinones in the respiratory chain. The immediate electron acceptor for the enzyme in this species is believed to be a menaquinone. Couples the redox reaction to proton translocation (for every two electrons transferred, four hydrogen ions are translocated across the cytoplasmic membrane), and thus conserves the redox energy in a proton gradient. The polypeptide is NADH-quinone oxidoreductase subunit B (Chlorobium phaeovibrioides (strain DSM 265 / 1930) (Prosthecochloris vibrioformis (strain DSM 265))).